Reading from the N-terminus, the 64-residue chain is Micrurotoxin 2 (64 aa).

Cystine bridges form between C3/C24, C6/C11, C17/C41, C45/C57, and C58/C63.

Belongs to the three-finger toxin family. Ancestral subfamily. Expressed by the venom gland.

It is found in the secreted. Functionally, allosteric modulator of the GABA(A) receptor (GABR), possibly increasing receptor affinity for the agonist, thus enhancing receptor opening and macroscopic desensitization. In vivo, intracerebroventricular injection into mice results in periods of reduced basal activity, followed by bursts of intense seizures and death. The chain is Micrurotoxin 2 from Micrurus mipartitus (Red-tailed coral snake).